Consider the following 289-residue polypeptide: 33 kDa chaperonin (289 aa).

Cystine bridges form between C229-C231 and C262-C265.

The protein belongs to the HSP33 family. Post-translationally, under oxidizing conditions two disulfide bonds are formed involving the reactive cysteines. Under reducing conditions zinc is bound to the reactive cysteines and the protein is inactive.

The protein localises to the cytoplasm. Its function is as follows. Redox regulated molecular chaperone. Protects both thermally unfolding and oxidatively damaged proteins from irreversible aggregation. Plays an important role in the bacterial defense system toward oxidative stress. The chain is 33 kDa chaperonin from Pectobacterium atrosepticum (strain SCRI 1043 / ATCC BAA-672) (Erwinia carotovora subsp. atroseptica).